The primary structure comprises 365 residues: Peptide chain release factor 2 (365 aa).

Gln251 bears the N5-methylglutamine mark.

The protein belongs to the prokaryotic/mitochondrial release factor family. Post-translationally, methylated by PrmC. Methylation increases the termination efficiency of RF2.

The protein resides in the cytoplasm. Functionally, peptide chain release factor 2 directs the termination of translation in response to the peptide chain termination codons UGA and UAA. This is Peptide chain release factor 2 from Campylobacter jejuni (strain RM1221).